The sequence spans 437 residues: Serine--tRNA ligase (437 aa).

244–246 (TAE) lines the L-serine pocket. Residue 275–277 (RSE) coordinates ATP. Glutamate 298 contacts L-serine. 362-365 (EISS) serves as a coordination point for ATP. Residue serine 397 participates in L-serine binding.

This sequence belongs to the class-II aminoacyl-tRNA synthetase family. Type-1 seryl-tRNA synthetase subfamily. As to quaternary structure, homodimer. The tRNA molecule binds across the dimer.

The protein resides in the cytoplasm. The enzyme catalyses tRNA(Ser) + L-serine + ATP = L-seryl-tRNA(Ser) + AMP + diphosphate + H(+). It catalyses the reaction tRNA(Sec) + L-serine + ATP = L-seryl-tRNA(Sec) + AMP + diphosphate + H(+). It participates in aminoacyl-tRNA biosynthesis; selenocysteinyl-tRNA(Sec) biosynthesis; L-seryl-tRNA(Sec) from L-serine and tRNA(Sec): step 1/1. Its function is as follows. Catalyzes the attachment of serine to tRNA(Ser). Is also able to aminoacylate tRNA(Sec) with serine, to form the misacylated tRNA L-seryl-tRNA(Sec), which will be further converted into selenocysteinyl-tRNA(Sec). This Nitrosomonas europaea (strain ATCC 19718 / CIP 103999 / KCTC 2705 / NBRC 14298) protein is Serine--tRNA ligase.